Reading from the N-terminus, the 155-residue chain is Small ribosomal subunit protein uS7cz/uS7cy (155 aa).

Belongs to the universal ribosomal protein uS7 family. Part of the 30S ribosomal subunit.

It localises to the plastid. The protein localises to the chloroplast. One of the primary rRNA binding proteins, it binds directly to 16S rRNA where it nucleates assembly of the head domain of the 30S subunit. This chain is Small ribosomal subunit protein uS7cz/uS7cy (rps7-A), found in Crucihimalaya wallichii (Rock-cress).